Consider the following 156-residue polypeptide: ATP synthase subunit b (156 aa).

A helical membrane pass occupies residues L7–L29.

Belongs to the ATPase B chain family. As to quaternary structure, F-type ATPases have 2 components, F(1) - the catalytic core - and F(0) - the membrane proton channel. F(1) has five subunits: alpha(3), beta(3), gamma(1), delta(1), epsilon(1). F(0) has three main subunits: a(1), b(2) and c(10-14). The alpha and beta chains form an alternating ring which encloses part of the gamma chain. F(1) is attached to F(0) by a central stalk formed by the gamma and epsilon chains, while a peripheral stalk is formed by the delta and b chains.

The protein localises to the cell inner membrane. Functionally, f(1)F(0) ATP synthase produces ATP from ADP in the presence of a proton or sodium gradient. F-type ATPases consist of two structural domains, F(1) containing the extramembraneous catalytic core and F(0) containing the membrane proton channel, linked together by a central stalk and a peripheral stalk. During catalysis, ATP synthesis in the catalytic domain of F(1) is coupled via a rotary mechanism of the central stalk subunits to proton translocation. In terms of biological role, component of the F(0) channel, it forms part of the peripheral stalk, linking F(1) to F(0). This chain is ATP synthase subunit b, found in Methylobacillus flagellatus (strain ATCC 51484 / DSM 6875 / VKM B-1610 / KT).